The sequence spans 685 residues: MEDKEVVNSENKVEVIKEEENIKKEDDVTKKVSENTEDNDISLANNVSLGKHLLIGSSLKKGISVSVRGRTMNLGMNAKQAGSAWKKKETENVEEEGEEKEKKIDDESFPDLLESTEKMKSELSKEKDKKKKQLKDGKKVEDNVNVFNSGFDRGGKTTDGNSTEFNDKKKYNMYDGNKKNDNAFNKKWYNNQQNDMNNNNQNNQNNMNNNNNNNNGHIFDTNESEEVTGYILPGFKGKHMVGFTCFLKRGTQNPVPPPPAPPLTNNQGENNIPTDNRNNENKKLMNTNIKMNQQVDNNNNNNNNNNNLGSAMNTPMNNMNKGGPRNNVNNSEHMREHSNHTVNRFAPMGQYANSKNNNMNNVHNVNNVNNVNNVNNVNNVNNMNNMNNMNNMNNNMNNMNNNMNNNMNNMNNMNSMNSMNNMNNMNSMNNMNNMNNMNNNNNNKFNENNILYKGTNYNRNVKNLGQNNNEGNTNMKHGHNNNRGQGNNNNNNNNNNFNRRNDKNDNRNFRRKDIDLEINWRNTANPTQEENNNNMNHNNNYNNNNNNNNNNNNNNNNNNNTNHGKNFRNFNNLNNMKNNNSSNNKMMGMNHMQQKGMNSSTGGHKYSFNKNDDQKNNNKMYKNNMGNANNNNNNNAVNTNFNNNNNNGNFHMNNNKSINSMDVKKTRMKDIRNLNDPPKVNNNEA.

Disordered stretches follow at residues 78 to 220, 251 to 280, 296 to 332, and 459 to 657; these read AKQA…HIFD, TQNP…RNNE, DNNN…NNSE, and RNVK…NNKS. Residues 86–139 adopt a coiled-coil conformation; sequence KKKETENVEEEGEEKEKKIDDESFPDLLESTEKMKSELSKEKDKKKKQLKDGKK. Basic and acidic residues-rich tracts occupy residues 115–127 and 165–181; these read STEK…SKEK and FNDK…KKND. The span at 190–215 shows a compositional bias: low complexity; it reads NNQQNDMNNNNQNNQNNMNNNNNNNN. Over residues 263–276 the composition is skewed to polar residues; that stretch reads LTNNQGENNIPTDN. Residues 297-307 show a composition bias toward low complexity; that stretch reads NNNNNNNNNNN. Polar residues predominate over residues 308 to 331; it reads LGSAMNTPMNNMNKGGPRNNVNNS. Composition is skewed to low complexity over residues 460-474 and 481-498; these read NVKN…GNTN and NNRG…NNFN. Over residues 499–515 the composition is skewed to basic and acidic residues; that stretch reads RRNDKNDNRNFRRKDID. The span at 520–530 shows a compositional bias: polar residues; that stretch reads WRNTANPTQEE. The span at 531–590 shows a compositional bias: low complexity; that stretch reads NNNNMNHNNNYNNNNNNNNNNNNNNNNNNNTNHGKNFRNFNNLNNMKNNNSSNNKMMGMN. Residues 591–602 are compositionally biased toward polar residues; sequence HMQQKGMNSSTG. Residues 617 to 656 are compositionally biased toward low complexity; the sequence is NNKMYKNNMGNANNNNNNNAVNTNFNNNNNNGNFHMNNNK.

This is an uncharacterized protein from Plasmodium falciparum (isolate 3D7).